We begin with the raw amino-acid sequence, 593 residues long: Copine-5 (593 aa).

The C2 1 domain maps to 2–134 (EQPEDMASLS…SPGSRLEKPL (133 aa)). S19 is subject to Phosphoserine. Residues D38, D44, D98, D100, S103, K108, and D110 each coordinate Ca(2+). S103 bears the Phosphoserine mark. Position 140 is a phosphoserine (S140). A C2 2 domain is found at 161–284 (KCGTIILSAE…ARGQSQFNIY (124 aa)). Residues D192, D198, D254, D256, and D262 each coordinate Ca(2+). The region spanning 328 to 554 (NFTVAIDFTA…DVLAEIPDQL (227 aa)) is the VWFA domain. The interval 562 to 593 (GIRPRPPPAAPTHSPSQSPARTPPASPLHTHI) is disordered. Over residues 572–581 (PTHSPSQSPA) the composition is skewed to low complexity.

Belongs to the copine family. The cofactor is Ca(2+). As to expression, expressed in the brain, heart, stomach, spleen, lymph node and testis. Expressed in melanocytes.

It localises to the perikaryon. The protein resides in the cell projection. Its function is as follows. Probable calcium-dependent phospholipid-binding protein that may play a role in calcium-mediated intracellular processes. Plays a role in dendrite formation by melanocytes. In Homo sapiens (Human), this protein is Copine-5.